The sequence spans 346 residues: D-alanine--D-alanine ligase A (346 aa).

Residues 138–332 (KRLFLAAGVE…FAELCERICR (195 aa)) enclose the ATP-grasp domain. Position 164 to 217 (164 to 217 (QLGFPLVVKPNSQGSTVGLSIVHSQAELQPAIELAGRYGDEVMLERFVAGREVT)) interacts with ATP. Positions 286, 299, and 301 each coordinate Mg(2+).

The protein belongs to the D-alanine--D-alanine ligase family. It depends on Mg(2+) as a cofactor. Requires Mn(2+) as cofactor.

It localises to the cytoplasm. It catalyses the reaction 2 D-alanine + ATP = D-alanyl-D-alanine + ADP + phosphate + H(+). It participates in cell wall biogenesis; peptidoglycan biosynthesis. In terms of biological role, cell wall formation. This chain is D-alanine--D-alanine ligase A, found in Pseudomonas aeruginosa (strain ATCC 15692 / DSM 22644 / CIP 104116 / JCM 14847 / LMG 12228 / 1C / PRS 101 / PAO1).